The chain runs to 181 residues: Inner membrane-spanning protein YciB (181 aa).

The next 5 helical transmembrane spans lie at 22–42 (IYTA…VTYA), 50–70 (MQLI…FLHD), 80–100 (IVYC…KPVI), 122–142 (WVLF…EMPL), and 148–168 (FKVF…GMYV).

Belongs to the YciB family.

The protein resides in the cell inner membrane. Its function is as follows. Plays a role in cell envelope biogenesis, maintenance of cell envelope integrity and membrane homeostasis. The protein is Inner membrane-spanning protein YciB of Aliivibrio fischeri (strain ATCC 700601 / ES114) (Vibrio fischeri).